Here is a 210-residue protein sequence, read N- to C-terminus: MAKLRVSYEYTEAEDKSIRLGLFLIVSGILSLFIFGFCWLSPALQDLQATAANCTVLSVQQIGEVFECTFTCGTDCRGTSQYPCVQVYVNNSESNSRALLHSDQHQLLTNPKCSYIPPCKRENQKNSESVMNWQQYWKDEIGSQPFTCYFNQHQRPEDVLLQRTHDEIVLLHCFLWPVVAFVVGVLIVVLTICAKSLAVKAEAMKKRKFS.

Topologically, residues 1 to 19 are cytoplasmic; the sequence is MAKLRVSYEYTEAEDKSIR. Residues 20-40 traverse the membrane as a helical segment; that stretch reads LGLFLIVSGILSLFIFGFCWL. Residues 41-167 are Extracellular-facing; the sequence is SPALQDLQAT…DVLLQRTHDE (127 aa). Residues asparagine 53 and asparagine 90 are each glycosylated (N-linked (GlcNAc...) asparagine). The chain crosses the membrane as a helical span at residues 168-188; it reads IVLLHCFLWPVVAFVVGVLIV. The Cytoplasmic portion of the chain corresponds to 189-210; sequence VLTICAKSLAVKAEAMKKRKFS.

Belongs to the KCNMB (TC 8.A.14.1) family. KCNMB4 subfamily. In terms of assembly, interacts with KCNMA1 tetramer. There are probably 4 molecules of KCMNB4 per KCNMA1 tetramer. Interacts with FMR1 (via N-terminus). In terms of processing, phosphorylated. Phosphorylation modulates its effect on KCNMA1 activation kinetics. N-glycosylated. A highly glycosylated form is promoted by KCNMA1. Glycosylation, which is not required for the interaction with KCNMA1 and subcellular location, increases protection against charybdotoxin.

The protein localises to the membrane. In terms of biological role, regulatory subunit of the calcium activated potassium KCNMA1 (maxiK) channel. Modulates the calcium sensitivity and gating kinetics of KCNMA1, thereby contributing to KCNMA1 channel diversity. Decreases the gating kinetics and calcium sensitivity of the KCNMA1 channel, but with fast deactivation kinetics. May decrease KCNMA1 channel openings at low calcium concentrations but increases channel openings at high calcium concentrations. Makes KCNMA1 channel resistant to 100 nM charybdotoxin (CTX) toxin concentrations. This Rattus norvegicus (Rat) protein is Calcium-activated potassium channel subunit beta-4 (Kcnmb4).